The chain runs to 637 residues: ATP-dependent zinc metalloprotease FtsH (637 aa).

Over 1–6 (MNNQGR) the chain is Cytoplasmic. A helical membrane pass occupies residues 7–27 (SILAWAALFIFVILLFNVFQS). The Periplasmic portion of the chain corresponds to 28–103 (DGLLGVRNNI…VVPLETRMNT (76 aa)). The chain crosses the membrane as a helical span at residues 104 to 124 (FLGFLISWFPMLLLIGVWVFF). Topologically, residues 125–637 (MRQMHGGGKA…TKDKKENIIS (513 aa)) are cytoplasmic. 195-202 (GPPGTGKT) provides a ligand contact to ATP. His417 contacts Zn(2+). Glu418 is an active-site residue. Zn(2+) contacts are provided by His421 and Asp495.

It in the central section; belongs to the AAA ATPase family. In the C-terminal section; belongs to the peptidase M41 family. Homohexamer. It depends on Zn(2+) as a cofactor.

The protein resides in the cell inner membrane. In terms of biological role, acts as a processive, ATP-dependent zinc metallopeptidase for both cytoplasmic and membrane proteins. Plays a role in the quality control of integral membrane proteins. This Rickettsia prowazekii (strain Madrid E) protein is ATP-dependent zinc metalloprotease FtsH.